A 773-amino-acid chain; its full sequence is E3 ubiquitin-protein ligase RFWD3 (773 aa).

Disordered stretches follow at residues 18–67 (VAEQ…SQVG), 92–117 (RVEN…IPVS), 139–230 (LRPP…EEVV), and 259–279 (GETL…SVSK). Phosphoserine; by ATM and ATR is present on Ser-47. Residues 50 to 59 (APPLLQPAPA) show a composition bias toward low complexity. Phosphoserine; by ATM and ATR is present on Ser-64. Over residues 151–164 (RSRRRRGSASRRSR) the composition is skewed to basic residues. Polar residues predominate over residues 186–205 (VSRTQPHLPSMSQDSETRNP). Positions 207 to 221 (SEDLQVSSSSSSDSE) are enriched in low complexity. Residues 263–273 (PKQSPQKTNPL) are compositionally biased toward polar residues. The RING-type; degenerate zinc finger occupies 287–331 (CTICFEHWTNAGDHRLSALRCGHLFGYKCISKWLKGQARKCPQCN). Residues 361 to 403 (SLLKEQMLRKQAELESAQCRLQLQVLTDECSKLHSRVQDLQKL) are a coiled coil. WD repeat units lie at residues 494–536 (MHGK…QTYN), 538–576 (GRPV…SHIQ), and 582–627 (KARC…SHWP).

As to quaternary structure, interacts with MDM2 and p53/TP53. Binds to the RPA complex via direct interaction with RPA2. Interacts with RAD51. In terms of processing, phosphorylated at Ser-46 and Ser-63 upon DNA damage by ATM or ATR. ATM phosphorylation occurs at early times upon DNA damage, while ATR is the major kinase at later times. Phosphorylation by ATM and ATR is required to stabilize p53/TP53. Part of the phosphorylation depends upon RPA2 presence.

It localises to the nucleus. Its subcellular location is the PML body. The protein resides in the cytoplasm. It catalyses the reaction S-ubiquitinyl-[E2 ubiquitin-conjugating enzyme]-L-cysteine + [acceptor protein]-L-lysine = [E2 ubiquitin-conjugating enzyme]-L-cysteine + N(6)-ubiquitinyl-[acceptor protein]-L-lysine.. It functions in the pathway protein modification; protein ubiquitination. Its function is as follows. E3 ubiquitin-protein ligase required for the repair of DNA interstrand cross-links (ICL) in response to DNA damage. Plays a key role in RPA-mediated DNA damage signaling and repair. Acts by mediating ubiquitination of the RPA complex (RPA1, RPA2 and RPA3 subunits) and RAD51 at stalled replication forks, leading to remove them from DNA damage sites and promote homologous recombination. Also mediates the ubiquitination of p53/TP53 in the late response to DNA damage, and acts as a positive regulator of p53/TP53 stability, thereby regulating the G1/S DNA damage checkpoint. May act by catalyzing the formation of short polyubiquitin chains on p53/TP53 that are not targeted to the proteasome. In response to ionizing radiation, interacts with MDM2 and enhances p53/TP53 ubiquitination, possibly by restricting MDM2 from extending polyubiquitin chains on ubiquitinated p53/TP53. Required to translesion DNA synthesis across DNA-protein cross-link adducts by catalyzing ubiquitination of proteins on single-stranded DNA (ssDNA). The polypeptide is E3 ubiquitin-protein ligase RFWD3 (RFWD3) (Ailuropoda melanoleuca (Giant panda)).